We begin with the raw amino-acid sequence, 118 residues long: NADH-ubiquinone oxidoreductase chain 3 (118 aa).

3 helical membrane-spanning segments follow: residues 7 to 27 (ICIS…VPFL), 62 to 82 (LVSI…PWAV), and 87 to 107 (IDLF…IGFL).

This sequence belongs to the complex I subunit 3 family.

The protein resides in the mitochondrion membrane. The enzyme catalyses a ubiquinone + NADH + 5 H(+)(in) = a ubiquinol + NAD(+) + 4 H(+)(out). Its function is as follows. Core subunit of the mitochondrial membrane respiratory chain NADH dehydrogenase (Complex I) that is believed to belong to the minimal assembly required for catalysis. Complex I functions in the transfer of electrons from NADH to the respiratory chain. The immediate electron acceptor for the enzyme is believed to be ubiquinone. In Oenothera berteroana (Bertero's evening primrose), this protein is NADH-ubiquinone oxidoreductase chain 3 (ND3).